Consider the following 111-residue polypeptide: Small ribosomal subunit protein bS16 (111 aa).

Positions 92–111 (EKGVKESNEIVEPEGEEVKE) are disordered. Residues 100–111 (EIVEPEGEEVKE) show a composition bias toward acidic residues.

This sequence belongs to the bacterial ribosomal protein bS16 family.

This Petrotoga mobilis (strain DSM 10674 / SJ95) protein is Small ribosomal subunit protein bS16.